The following is a 124-amino-acid chain: Ribonuclease pancreatic (124 aa).

Basic and acidic residues predominate over residues 1 to 13 (KESAAAKFERQHM). A disordered region spans residues 1–24 (KESAAAKFERQHMDSSTSSASSSN). Substrate contacts are provided by Lys-7 and Arg-10. The Proton acceptor role is filled by His-12. 4 cysteine pairs are disulfide-bonded: Cys-26–Cys-84, Cys-40–Cys-95, Cys-58–Cys-110, and Cys-65–Cys-72. Residues 41–45 (KPVNT), Lys-66, and Arg-85 each bind substrate. His-119 functions as the Proton donor in the catalytic mechanism.

It belongs to the pancreatic ribonuclease family. As to quaternary structure, monomer. Interacts with and forms tight 1:1 complexes with RNH1. Dimerization of two such complexes may occur. Interaction with RNH1 inhibits this protein. Pancreas.

Its subcellular location is the secreted. It catalyses the reaction an [RNA] containing cytidine + H2O = an [RNA]-3'-cytidine-3'-phosphate + a 5'-hydroxy-ribonucleotide-3'-[RNA].. The enzyme catalyses an [RNA] containing uridine + H2O = an [RNA]-3'-uridine-3'-phosphate + a 5'-hydroxy-ribonucleotide-3'-[RNA].. Its function is as follows. Endonuclease that catalyzes the cleavage of RNA on the 3' side of pyrimidine nucleotides. Acts on single-stranded and double-stranded RNA. This is Ribonuclease pancreatic (RNASE1) from Connochaetes taurinus (Blue wildebeest).